Consider the following 79-residue polypeptide: Tungsten-containing formylmethanofuran dehydrogenase 2 subunit G (79 aa).

4Fe-4S ferredoxin-type domains are found at residues 2–31 (VKIV…SPNV) and 51–79 (TVSV…EIKT). Residues Cys11, Cys14, Cys17, Cys21, Cys60, Cys63, Cys66, and Cys70 each contribute to the [4Fe-4S] cluster site.

[4Fe-4S] cluster serves as cofactor.

The enzyme catalyses N-formylmethanofuran + 2 oxidized [2Fe-2S]-[ferredoxin] + H2O = methanofuran + 2 reduced [2Fe-2S]-[ferredoxin] + CO2 + H(+). It participates in one-carbon metabolism; methanogenesis from CO(2); 5,10-methenyl-5,6,7,8-tetrahydromethanopterin from CO(2): step 1/3. Its activity is regulated as follows. Not inactivated by cyanide. Catalyzes the reversible oxidation of CO(2) and methanofuran (MFR) to N-formylmethanofuran (CHO-MFR). This enzyme is oxygen-labile. May function as an electron transfer protein. This chain is Tungsten-containing formylmethanofuran dehydrogenase 2 subunit G (fwdG), found in Methanopyrus kandleri (strain AV19 / DSM 6324 / JCM 9639 / NBRC 100938).